A 322-amino-acid polypeptide reads, in one-letter code: Putative A-type inclusion protein (322 aa).

A disordered region spans residues Leu-284–Phe-322.

It belongs to the chordopoxvirinae A26 protein family.

Encodes a truncated version of poxvirus A26 protein. In Vaccinia virus (strain Copenhagen) (VACV), this protein is Putative A-type inclusion protein.